Here is a 332-residue protein sequence, read N- to C-terminus: Glyceraldehyde-3-phosphate dehydrogenase 2 (332 aa).

NAD(+) is bound by residues R11–I12, D32, and R77. D-glyceraldehyde 3-phosphate contacts are provided by residues S148–T150, T179, T208–G209, and R231. C149 serves as the catalytic Nucleophile. Residue Y273 is modified to Phosphotyrosine. Phosphothreonine is present on T274. Residue N313 coordinates NAD(+).

It belongs to the glyceraldehyde-3-phosphate dehydrogenase family. In terms of assembly, homotetramer.

Its subcellular location is the cytoplasm. It catalyses the reaction D-glyceraldehyde 3-phosphate + phosphate + NAD(+) = (2R)-3-phospho-glyceroyl phosphate + NADH + H(+). Its pathway is carbohydrate degradation; glycolysis; pyruvate from D-glyceraldehyde 3-phosphate: step 1/5. This is Glyceraldehyde-3-phosphate dehydrogenase 2 (Gapdh2) from Drosophila melanogaster (Fruit fly).